A 282-amino-acid polypeptide reads, in one-letter code: Phosphate import ATP-binding protein PstB (282 aa).

Residues 1 to 25 are compositionally biased toward polar residues; it reads MKALNANISTMSEVSRSATPQSDSP. Residues 1 to 26 form a disordered region; it reads MKALNANISTMSEVSRSATPQSDSPA. The region spanning 36 to 277 is the ABC transporter domain; the sequence is IRIANFNAWY…PQEKRTDDYV (242 aa). An ATP-binding site is contributed by 68-75; that stretch reads GPSGCGKS.

Belongs to the ABC transporter superfamily. Phosphate importer (TC 3.A.1.7) family. As to quaternary structure, the complex is composed of two ATP-binding proteins (PstB), two transmembrane proteins (PstC and PstA) and a solute-binding protein (PstS).

The protein resides in the cell inner membrane. The enzyme catalyses phosphate(out) + ATP + H2O = ADP + 2 phosphate(in) + H(+). Functionally, part of the ABC transporter complex PstSACB involved in phosphate import. Responsible for energy coupling to the transport system. The chain is Phosphate import ATP-binding protein PstB from Rhodopirellula baltica (strain DSM 10527 / NCIMB 13988 / SH1).